We begin with the raw amino-acid sequence, 86 residues long: Conidiation-specific protein 10 (86 aa).

Polar residues predominate over residues 1–11 (MAGTGNDNPGN). The disordered stretch occupies residues 1-86 (MAGTGNDNPG…SGGTGADDDE (86 aa)). Residues 49-58 (SKGGKASSGS) are compositionally biased toward low complexity. The segment covering 62–71 (GSEKAREAGR) has biased composition (basic and acidic residues). Positions 75-86 (KASGGTGADDDE) are enriched in gly residues.

This sequence belongs to the con-10 family.

The protein is Conidiation-specific protein 10 (con-10) of Neurospora crassa (strain ATCC 24698 / 74-OR23-1A / CBS 708.71 / DSM 1257 / FGSC 987).